We begin with the raw amino-acid sequence, 73 residues long: Kazal peptide Pr13a (73 aa).

A signal peptide spans 1-20; the sequence is MKYIILFLVLIGLQANLALG. One can recognise a Kazal-like domain in the interval 21 to 73; it reads SKCKCDCTKYPYSPVCAKELKTGDTETFNNVCQLQCYNCTHMKNYVVIYSGSC. 3 cysteine pairs are disulfide-bonded: C23–C59, C27–C52, and C36–C73.

As to expression, expressed by the venom gland (anterior main gland) (at protein level).

The protein localises to the secreted. In terms of biological role, may act as a serine protease inhibitor, since it possess the kazal serine protease inhibitor signature. This chain is Kazal peptide Pr13a, found in Platymeris rhadamanthus (Red spot assassin bug).